The following is an 81-amino-acid chain: Large ribosomal subunit protein uL29c (81 aa).

This sequence belongs to the universal ribosomal protein uL29 family.

The protein resides in the plastid. Its subcellular location is the chloroplast. This is Large ribosomal subunit protein uL29c from Phaeodactylum tricornutum (strain CCAP 1055/1).